The sequence spans 592 residues: Cryptochrome-2 (592 aa).

Residues 21–150 (ASSVHWFRKG…EVVTENSHTL (130 aa)) enclose the Photolyase/cryptochrome alpha/beta domain. A Glycyl lysine isopeptide (Lys-Gly) (interchain with G-Cter in ubiquitin) cross-link involves residue K29. Position 89 is a phosphoserine (S89). Glycyl lysine isopeptide (Lys-Gly) (interchain with G-Cter in ubiquitin) cross-links involve residues K125 and K241. Residue S265 is modified to Phosphoserine; by MAPK. Residue S270 participates in FAD binding. The residue at position 298 (S298) is a Phosphoserine. Q307 contacts FAD. A Glycyl lysine isopeptide (Lys-Gly) (interchain with G-Cter in ubiquitin) cross-link involves residue K347. FAD is bound by residues H373 and 405 to 407 (DAD). The interval 389–488 (WVSWESGVRV…IIGVDYPRPI (100 aa)) is required for inhibition of CLOCK-BMAL1-mediated transcription. Glycyl lysine isopeptide (Lys-Gly) (interchain with G-Cter in ubiquitin) cross-links involve residues K474 and K503. Residues 532 to 592 (VAEPGSSQAG…PTQEPASKDS (61 aa)) are disordered. Positions 536–547 (GSSQAGSISNTG) are enriched in polar residues. S553 is modified (phosphoserine; by GSK3-beta). S557 carries the phosphoserine; by DYRK1A and MAPK modification. Over residues 582-592 (MPTQEPASKDS) the composition is skewed to polar residues.

It belongs to the DNA photolyase class-1 family. In terms of assembly, component of the circadian core oscillator, which includes the CRY proteins, CLOCK or NPAS2, BMAL1 or BMAL2, CSNK1D and/or CSNK1E, TIMELESS, and the PER proteins. Interacts with TIMELESS. Interacts directly with PER1, PER2 and PER3; interaction with PER2 inhibits its ubiquitination and vice versa. Interacts with CLOCK-BMAL1. Interacts with BMAL1. Interacts with CLOCK. Interacts with NFIL3. Interacts with FBXL3 and FBXL21. FBXL3, PER2 and the cofactor FAD compete for overlapping binding sites. FBXL3 cannot bind CRY2 that interacts already with PER2 or that contains bound FAD. Interacts with PPP5C (via TPR repeats); the interaction down-regulates the PPP5C phosphatase activity on CSNK1E. Interacts with nuclear receptors AR and NR3C1/GR; the interaction is ligand dependent. Interacts with PRKDC. Interacts with CIART. Interacts with DDB1, USP7 and TARDBP. Interacts with HNF4A. Interacts with PPARA. Interacts with PPARG in a ligand-dependent manner. Interacts with PPARD (via domain NR LBD) in a ligand-dependent manner. Interacts with NR1I2 (via domain NR LBD) in a ligand-dependent manner. Interacts with NR1I3 and VDR in a ligand-dependent manner. Requires FAD as cofactor. The cofactor is (6R)-5,10-methylene-5,6,7,8-tetrahydrofolate. Phosphorylation on Ser-265 by MAPK is important for the inhibition of CLOCK-BMAL1-mediated transcriptional activity. Phosphorylation by CSKNE requires interaction with PER1 or PER2. Phosphorylated in a circadian manner at Ser-553 and Ser-557 in the suprachiasmatic nucleus (SCN) and liver. Phosphorylation at Ser-557 by DYRK1A promotes subsequent phosphorylation at Ser-553 by GSK3-beta: the two-step phosphorylation at the neighboring Ser residues leads to its proteasomal degradation. In terms of processing, ubiquitinated by the SCF(FBXL3) and SCF(FBXL21) complexes, regulating the balance between degradation and stabilization. The SCF(FBXL3) complex is mainly nuclear and mediates ubiquitination and subsequent degradation of CRY2. In contrast, cytoplasmic SCF(FBXL21) complex-mediated ubiquitination leads to stabilize CRY2 and counteract the activity of the SCF(FBXL3) complex. The SCF(FBXL3) and SCF(FBXL21) complexes probably mediate ubiquitination at different Lys residues. The SCF(FBXL3) complex recognizes and binds CRY2 phosphorylated at Ser-553 and Ser-557. Ubiquitination may be inhibited by PER2. Deubiquitinated by USP7. In terms of tissue distribution, expression in the retina is restricted to the photoreceptor layer (at protein level). Expressed in all tissues examined including heart, brain, spleen, lung, liver, skeletal muscle, kidney and testis. Weak expression in spleen.

Its subcellular location is the cytoplasm. The protein localises to the nucleus. With respect to regulation, KL001 (N-[3-(9H-carbazol-9-yl)-2-hydroxypropyl]-N-(2-furanylmethyl)-methanesulfonamide) binds to CRY1 and stabilizes it by inhibiting FBXL3- and ubiquitin-dependent degradation of CRY1 resulting in lengthening of the circadian periods. KL001-mediated CRY1 stabilization can inhibit glucagon-induced gluconeogenesis in primary hepatocytes. In terms of biological role, transcriptional repressor which forms a core component of the circadian clock. The circadian clock, an internal time-keeping system, regulates various physiological processes through the generation of approximately 24 hour circadian rhythms in gene expression, which are translated into rhythms in metabolism and behavior. It is derived from the Latin roots 'circa' (about) and 'diem' (day) and acts as an important regulator of a wide array of physiological functions including metabolism, sleep, body temperature, blood pressure, endocrine, immune, cardiovascular, and renal function. Consists of two major components: the central clock, residing in the suprachiasmatic nucleus (SCN) of the brain, and the peripheral clocks that are present in nearly every tissue and organ system. Both the central and peripheral clocks can be reset by environmental cues, also known as Zeitgebers (German for 'timegivers'). The predominant Zeitgeber for the central clock is light, which is sensed by retina and signals directly to the SCN. The central clock entrains the peripheral clocks through neuronal and hormonal signals, body temperature and feeding-related cues, aligning all clocks with the external light/dark cycle. Circadian rhythms allow an organism to achieve temporal homeostasis with its environment at the molecular level by regulating gene expression to create a peak of protein expression once every 24 hours to control when a particular physiological process is most active with respect to the solar day. Transcription and translation of core clock components (CLOCK, NPAS2, BMAL1, BMAL2, PER1, PER2, PER3, CRY1 and CRY2) plays a critical role in rhythm generation, whereas delays imposed by post-translational modifications (PTMs) are important for determining the period (tau) of the rhythms (tau refers to the period of a rhythm and is the length, in time, of one complete cycle). A diurnal rhythm is synchronized with the day/night cycle, while the ultradian and infradian rhythms have a period shorter and longer than 24 hours, respectively. Disruptions in the circadian rhythms contribute to the pathology of cardiovascular diseases, cancer, metabolic syndromes and aging. A transcription/translation feedback loop (TTFL) forms the core of the molecular circadian clock mechanism. Transcription factors, CLOCK or NPAS2 and BMAL1 or BMAL2, form the positive limb of the feedback loop, act in the form of a heterodimer and activate the transcription of core clock genes and clock-controlled genes (involved in key metabolic processes), harboring E-box elements (5'-CACGTG-3') within their promoters. The core clock genes: PER1/2/3 and CRY1/2 which are transcriptional repressors form the negative limb of the feedback loop and interact with the CLOCK|NPAS2-BMAL1|BMAL2 heterodimer inhibiting its activity and thereby negatively regulating their own expression. This heterodimer also activates nuclear receptors NR1D1/2 and RORA/B/G, which form a second feedback loop and which activate and repress BMAL1 transcription, respectively. CRY1 and CRY2 have redundant functions but also differential and selective contributions at least in defining the pace of the SCN circadian clock and its circadian transcriptional outputs. Less potent transcriptional repressor in cerebellum and liver than CRY1, though less effective in lengthening the period of the SCN oscillator. Seems to play a critical role in tuning SCN circadian period by opposing the action of CRY1. With CRY1, dispensable for circadian rhythm generation but necessary for the development of intercellular networks for rhythm synchrony. May mediate circadian regulation of cAMP signaling and gluconeogenesis by blocking glucagon-mediated increases in intracellular cAMP concentrations and in CREB1 phosphorylation. Besides its role in the maintenance of the circadian clock, is also involved in the regulation of other processes. Plays a key role in glucose and lipid metabolism modulation, in part, through the transcriptional regulation of genes involved in these pathways, such as LEP or ACSL4. Represses glucocorticoid receptor NR3C1/GR-induced transcriptional activity by binding to glucocorticoid response elements (GREs). Represses the CLOCK-BMAL1 induced transcription of BHLHE40/DEC1 and NAMPT. Represses PPARD and its target genes in the skeletal muscle and limits exercise capacity. Represses the transcriptional activity of NR1I2. The protein is Cryptochrome-2 (Cry2) of Mus musculus (Mouse).